A 177-amino-acid polypeptide reads, in one-letter code: MSRIGKKPVQVPAGVTANVDGQKVTAKGPKGELFFVANDEVSVKLENNTVVVQPVNESKDARAKWGMSRTMIENILKGVKDGYERKLEINGVGYRASMQGKNLQLALGFSHDVVYQTPEGITIAVPKPTEIVVSGINKQQVGQVAAEIREYRGPEPYKGKGVKYAEERIVRKEGKKK.

This sequence belongs to the universal ribosomal protein uL6 family. Part of the 50S ribosomal subunit.

Functionally, this protein binds to the 23S rRNA, and is important in its secondary structure. It is located near the subunit interface in the base of the L7/L12 stalk, and near the tRNA binding site of the peptidyltransferase center. This Sinorhizobium medicae (strain WSM419) (Ensifer medicae) protein is Large ribosomal subunit protein uL6.